Here is a 645-residue protein sequence, read N- to C-terminus: Iron-regulated surface determinant protein B (645 aa).

The N-terminal stretch at 1-40 (MNKQQKEFKSFYSIRKSSLGVASVAISTLLLLMSNGEAQA) is a signal peptide. The YSIRK-G/S signaling motif signature appears at 12 to 23 (YSIRKSSLGVAS). Over residues 38–53 (AQAAAEETGGTNTEAQ) the composition is skewed to low complexity. A disordered region spans residues 38–113 (AQAAAEETGG…APKETKAVKP (76 aa)). Residues 84-110 (KEVEAPTSETKEAKEVKEVKAPKETKA) are compositionally biased toward basic and acidic residues. NEAT domains are found at residues 144-269 (SAPN…KFKT) and 341-458 (KMTD…TKAN). The heme site is built by Met-362 and Tyr-440. Composition is skewed to basic and acidic residues over residues 458-476 (NTDKSNKKEQQDNSAKKEA) and 489-534 (VEKE…KGEV). A disordered region spans residues 458-619 (NTDKSNKKEQ…LPQTGEESNK (162 aa)). The segment covering 535–560 (ESSSTTPTKVVSTTQNVAKPTTASSK) has biased composition (low complexity). A compositionally biased stretch (polar residues) spans 585–615 (NIKNTNDGHTQSQNNKNTQENKAKSLPQTGE). The short motif at 610-614 (LPQTG) is the LPXTG sorting signal element. Thr-613 carries the pentaglycyl murein peptidoglycan amidated threonine modification. Positions 614-645 (GEESNKDMTLPLMALLALSSIVAFVLPRKRKN) are cleaved as a propeptide — removed by sortase.

It belongs to the IsdB family. In terms of assembly, interacts with host HBA; this interaction allows heme extraction as iron source. Interacts with IsdA.

Its subcellular location is the secreted. The protein localises to the cell wall. Functionally, cell wall-anchored surface receptor that extracts heme from oxidized metHb to enable growth on hemoglobin as a sole iron source. Rapidly extracts heme from hemoglobin and transfers it to IsdA or IsdC, which then relays it to the membrane transporter/IsdEF for internalization. Also promotes resistance to hydrogen peroxide and killing by neutrophils. The sequence is that of Iron-regulated surface determinant protein B (isdB) from Staphylococcus aureus (strain Mu3 / ATCC 700698).